Consider the following 99-residue polypeptide: Aspartyl/glutamyl-tRNA(Asn/Gln) amidotransferase subunit C (99 aa).

Belongs to the GatC family. As to quaternary structure, heterotrimer of A, B and C subunits.

It carries out the reaction L-glutamyl-tRNA(Gln) + L-glutamine + ATP + H2O = L-glutaminyl-tRNA(Gln) + L-glutamate + ADP + phosphate + H(+). It catalyses the reaction L-aspartyl-tRNA(Asn) + L-glutamine + ATP + H2O = L-asparaginyl-tRNA(Asn) + L-glutamate + ADP + phosphate + 2 H(+). Allows the formation of correctly charged Asn-tRNA(Asn) or Gln-tRNA(Gln) through the transamidation of misacylated Asp-tRNA(Asn) or Glu-tRNA(Gln) in organisms which lack either or both of asparaginyl-tRNA or glutaminyl-tRNA synthetases. The reaction takes place in the presence of glutamine and ATP through an activated phospho-Asp-tRNA(Asn) or phospho-Glu-tRNA(Gln). The protein is Aspartyl/glutamyl-tRNA(Asn/Gln) amidotransferase subunit C of Cupriavidus metallidurans (strain ATCC 43123 / DSM 2839 / NBRC 102507 / CH34) (Ralstonia metallidurans).